The primary structure comprises 563 residues: Probable ganciclovir kinase (563 aa).

Polar residues predominate over residues Met1 to Ile16. The disordered stretch occupies residues Met1–Lys33. ATP is bound by residues Leu202–Val210 and Lys219. Asp314 acts as the Proton acceptor in catalysis.

Belongs to the protein kinase superfamily. Tyr protein kinase family. HCMV ganciclovir subfamily.

Its function is as follows. Phosphorylates the antiviral nucleoside analog ganciclovir. The chain is Probable ganciclovir kinase (U69) from Human herpesvirus 6B (strain Z29) (HHV-6 variant B).